We begin with the raw amino-acid sequence, 527 residues long: Transcriptional regulator ATRX (527 aa).

The interval 1–527 (GRSVVEFGDM…RSYKQKKKRR (527 aa)) is disordered. The segment covering 14-23 (RQQSAVSSAG) has biased composition (polar residues). Residues 27–46 (PSGKEENVHSPEDKRVTKSK) show a composition bias toward basic and acidic residues. The segment covering 47-59 (EKSKHLRTRTGRK) has biased composition (basic residues). The span at 60-84 (VKSDVTDRFRKKEQSSESSEGEKKQ) shows a compositional bias: basic and acidic residues. Phosphoserine is present on residues Ser-62 and Ser-74. Basic residues predominate over residues 85–94 (GRQRTGTRGK). Composition is skewed to basic and acidic residues over residues 95–122 (KSTD…KLPE), 136–145 (NKNDTTDEAK), 152–194 (DKSC…EKKQ), and 204–250 (KRPE…KEVK). Lys-105 participates in a covalent cross-link: Glycyl lysine isopeptide (Lys-Gly) (interchain with G-Cter in SUMO2). A phosphoserine mark is found at Ser-112, Ser-113, and Ser-114. Ser-162 bears the Phosphoserine mark. Arg-184 carries the post-translational modification Citrulline. Positions 267–297 (KQKKQRMSAKKKNSNTKERKRKSLRATTTKR) are enriched in basic residues. An interaction with DAXX region spans residues 290–427 (LRATTTKRKQ…SNQVNSESDS (138 aa)). Ser-345, Ser-346, and Ser-354 each carry phosphoserine. The span at 368 to 382 (PENRIAKKMLLEEIK) shows a compositional bias: basic and acidic residues. Acidic residues predominate over residues 387–398 (SDEDGSSDDEPK). Residues 399 to 410 (EGEKKRIGKQSE) show a composition bias toward basic and acidic residues. Residues Ser-423, Ser-425, and Ser-427 each carry the phosphoserine modification. Basic residues predominate over residues 435 to 446 (PRYRHRLLRHKL). Ser-449 and Ser-453 each carry phosphoserine. Basic and acidic residues-rich tracts occupy residues 454-469 (GGEK…ETKG) and 509-518 (KKAELEENQR).

The protein belongs to the SNF2/RAD54 helicase family. Interacts with DAXX to form the chromatin remodeling complex ATRX:DAXX. Probably binds EZH2. Binds annexin V in a calcium and phosphatidylcholine/phosphatidylserine-dependent manner. Interacts directly with CBX5 via the PxVxL motif. Interacts with RAD50, MRE11 and NBN; indicative for an association with the MRN complex. Interacts with histone MACROH2A1. Interacts with histone H3 peptides methylated at 'Lys-10' with preferences H3K9me3 &gt; H3K9me2 &gt; H3K9me1. Interacts with histone H3 peptides unmethylated at 'Lys-5' (H3K4me0). Interacts with MECP2, SMC1 and SMC3. Interacts with SETDB1, TRIM28 and ZNF274. Post-translationally, citrullinated by PADI4.

The protein resides in the nucleus. It is found in the chromosome. Its subcellular location is the telomere. It localises to the PML body. The catalysed reaction is ATP + H2O = ADP + phosphate + H(+). Involved in transcriptional regulation and chromatin remodeling. Facilitates DNA replication in multiple cellular environments and is required for efficient replication of a subset of genomic loci. Binds to DNA tandem repeat sequences in both telomeres and euchromatin and in vitro binds DNA quadruplex structures. May help stabilizing G-rich regions into regular chromatin structures by remodeling G4 DNA and incorporating H3.3-containing nucleosomes. Catalytic component of the chromatin remodeling complex ATRX:DAXX which has ATP-dependent DNA translocase activity and catalyzes the replication-independent deposition of histone H3.3 in pericentric DNA repeats outside S-phase and telomeres, and the in vitro remodeling of H3.3-containing nucleosomes. Its heterochromatin targeting is proposed to involve a combinatorial readout of histone H3 modifications (specifically methylation states of H3K9 and H3K4) and association with CBX5. Involved in maintaining telomere structural integrity in embryonic stem cells probably implying recruitment of CBX5 to telomeres. May be involved in transcriptional regulation of telomeric repeat-containing RNA (TERRA). Acts as a negative regulator of chromatin incorporation of transcriptionally repressive histone MACROH2A1, particularily at telomeres. Participates in the allele-specific gene expression at the imprinted IGF2/H19 gene locus. On the maternal allele, required for the chromatin occupancy of SMC1 and CTCTF within the H19 imprinting control region (ICR) and involved in esatblishment of histone tails modifications in the ICR. Binds to zinc-finger coding genes with atypical chromatin signatures and regulates its H3K9me3 levels. Forms a complex with ZNF274, TRIM28 and SETDB1 to facilitate the deposition and maintenance of H3K9me3 at the 3' exons of zinc-finger genes. The polypeptide is Transcriptional regulator ATRX (Atrx) (Rattus norvegicus (Rat)).